The primary structure comprises 405 residues: Na(+)-translocating NADH-quinone reductase subunit F (405 aa).

A helical transmembrane segment spans residues 3-23; the sequence is IILGIVMFTVIVLALALMILF. One can recognise a 2Fe-2S ferredoxin-type domain in the interval 32-124; the sequence is GDITIKVNDE…DMDIEVPEEV (93 aa). 4 residues coordinate [2Fe-2S] cluster: Cys-67, Cys-73, Cys-76, and Cys-108. In terms of domain architecture, FAD-binding FR-type spans 127-267; the sequence is VKKWECTVIS…SGPFGEFFAK (141 aa).

Belongs to the NqrF family. As to quaternary structure, composed of six subunits; NqrA, NqrB, NqrC, NqrD, NqrE and NqrF. [2Fe-2S] cluster is required as a cofactor. FAD serves as cofactor.

It is found in the cell inner membrane. It catalyses the reaction a ubiquinone + n Na(+)(in) + NADH + H(+) = a ubiquinol + n Na(+)(out) + NAD(+). NQR complex catalyzes the reduction of ubiquinone-1 to ubiquinol by two successive reactions, coupled with the transport of Na(+) ions from the cytoplasm to the periplasm. The first step is catalyzed by NqrF, which accepts electrons from NADH and reduces ubiquinone-1 to ubisemiquinone by a one-electron transfer pathway. The chain is Na(+)-translocating NADH-quinone reductase subunit F from Neisseria gonorrhoeae (strain ATCC 700825 / FA 1090).